A 535-amino-acid chain; its full sequence is Bifunctional purine biosynthesis protein PurH (535 aa).

The region spanning 6–151 is the MGS-like domain; it reads TRLPIRRALI…KNHKDVAIVV (146 aa).

It belongs to the PurH family.

It catalyses the reaction (6R)-10-formyltetrahydrofolate + 5-amino-1-(5-phospho-beta-D-ribosyl)imidazole-4-carboxamide = 5-formamido-1-(5-phospho-D-ribosyl)imidazole-4-carboxamide + (6S)-5,6,7,8-tetrahydrofolate. The catalysed reaction is IMP + H2O = 5-formamido-1-(5-phospho-D-ribosyl)imidazole-4-carboxamide. The protein operates within purine metabolism; IMP biosynthesis via de novo pathway; 5-formamido-1-(5-phospho-D-ribosyl)imidazole-4-carboxamide from 5-amino-1-(5-phospho-D-ribosyl)imidazole-4-carboxamide (10-formyl THF route): step 1/1. It participates in purine metabolism; IMP biosynthesis via de novo pathway; IMP from 5-formamido-1-(5-phospho-D-ribosyl)imidazole-4-carboxamide: step 1/1. The chain is Bifunctional purine biosynthesis protein PurH from Pseudomonas fluorescens (strain ATCC BAA-477 / NRRL B-23932 / Pf-5).